A 358-amino-acid chain; its full sequence is Chondroadherin (358 aa).

A signal peptide spans 1–20 (MARALLFSLVFLAILLPALA). Positions 21–50 (ACPQNCHCHGDLQHVICDKVGLQKIPKVSE) constitute an LRRNT domain. Cys22 and Cys37 form a disulfide bridge. LRR repeat units lie at residues 51-72 (TTKL…SFRT), 75-96 (NLVS…AFRG), 99-120 (QLIY…AFDD), 123-144 (ELTY…LLSP), 147-168 (NLFI…AFQG), 171-192 (DLRW…SLDD), 195-216 (NLAK…ALSK), 219-240 (VVEE…AFQS), 244-265 (YLET…AFSG), and 268-289 (TLKH…FPFD). The O-linked (GalNAc...) serine glycan is linked to Ser143. The LRRCT domain occupies 299–347 (NPWKCTCQLRGLRRWLEAKASRPDATCSSPAKFKGQRIRDTDALRSCKS). 2 cysteine pairs are disulfide-bonded: Cys303–Cys345 and Cys305–Cys325. The disordered stretch occupies residues 322–358 (DATCSSPAKFKGQRIRDTDALRSCKSPTKRSKKAGRH). A compositionally biased stretch (basic residues) spans 348–358 (PTKRSKKAGRH).

This sequence belongs to the small leucine-rich proteoglycan (SLRP) family. SLRP class IV subfamily. As to quaternary structure, mostly monomeric. Interacts with collagen type II. As to expression, cartilage.

The protein resides in the secreted. It localises to the extracellular space. Its subcellular location is the extracellular matrix. Promotes attachment of chondrocytes, fibroblasts, and osteoblasts. This binding is mediated (at least for chondrocytes and fibroblasts) by the integrin alpha(2)beta(1). May play an important role in the regulation of chondrocyte growth and proliferation. The sequence is that of Chondroadherin (Chad) from Mus musculus (Mouse).